Here is an 881-residue protein sequence, read N- to C-terminus: Formin-like protein 10 (881 aa).

Residues 1 to 24 (MAMKRVVFLLLLVAASALVKSSRG) form the signal peptide. Positions 194–223 (LTPSNSLNMEPPSPYYPSKSAHKHQGVAPP) are disordered. The chain crosses the membrane as a helical span at residues 236–256 (VVLIAVLPTAALSFLAAFLCF). A compositionally biased stretch (polar residues) spans 333-346 (TLVTGGTQENNATS). Disordered regions lie at residues 333 to 427 (TLVT…EVNA), 683 to 703 (ENGR…ESLQ), and 837 to 881 (ASQK…DSND). Over residues 351–390 (LMPPPPPPPPPPPPPPPPPPPRPPPPPPPIKKGAPPPAPP) the composition is skewed to pro residues. Positions 400–424 (LSPTESSRSEESSASELASESSETE) are enriched in low complexity. Residues 422–854 (ETEVNAPRAK…KSQANGNSNN (433 aa)) form the FH2 domain. Positions 692-701 (STSDDNSNES) are enriched in polar residues. Positions 846 to 865 (SQANGNSNNPSSQSNPQEQQ) are enriched in low complexity. Over residues 870-881 (LDHHFDSSDSND) the composition is skewed to basic and acidic residues.

Belongs to the formin-like family. Class-I subfamily.

The protein localises to the membrane. The sequence is that of Formin-like protein 10 (FH10) from Oryza sativa subsp. japonica (Rice).